Consider the following 206-residue polypeptide: Large ribosomal subunit protein uL4 (206 aa).

Residues 44–87 form a disordered region; the sequence is NRQGTQSAKTRSEVSGGGRKPWRQKGTGHARQGSTRSPQWTGGG.

Belongs to the universal ribosomal protein uL4 family. Part of the 50S ribosomal subunit.

Its function is as follows. One of the primary rRNA binding proteins, this protein initially binds near the 5'-end of the 23S rRNA. It is important during the early stages of 50S assembly. It makes multiple contacts with different domains of the 23S rRNA in the assembled 50S subunit and ribosome. Forms part of the polypeptide exit tunnel. The polypeptide is Large ribosomal subunit protein uL4 (Lachnospira eligens (strain ATCC 27750 / DSM 3376 / VPI C15-48 / C15-B4) (Eubacterium eligens)).